We begin with the raw amino-acid sequence, 516 residues long: Arginyl-tRNA--protein transferase 1 (516 aa).

Basic and acidic residues predominate over residues 150 to 180; that stretch reads IESEEKEKEKSIKKEGSKEFIHPQSIEEKLG. The tract at residues 150-206 is disordered; that stretch reads IESEEKEKEKSIKKEGSKEFIHPQSIEEKLGSGEPSHPIKVHIGPKPGKGADLSKPP.

This sequence belongs to the R-transferase family. In terms of assembly, monomer. Interacts with LIAT1; LIAT1 is not a substrate of ATE1, the interaction takes place in the cytoplasm and seems to increase ATE1 arginyltransferase activity. As to quaternary structure, interacts with LIAT1; has a higher affinity than the other isoforms. Widely expressed.

It localises to the nucleus. It is found in the cytoplasm. The enzyme catalyses an N-terminal L-alpha-aminoacyl-[protein] + L-arginyl-tRNA(Arg) = an N-terminal L-arginyl-L-aminoacyl-[protein] + tRNA(Arg) + H(+). Its function is as follows. Involved in the post-translational conjugation of arginine to the N-terminal aspartate or glutamate of a protein. This arginylation is required for degradation of the protein via the ubiquitin pathway. Does not arginylate cysteine residues. This is Arginyl-tRNA--protein transferase 1 from Mus musculus (Mouse).